Consider the following 86-residue polypeptide: Large ribosomal subunit protein uL24 (86 aa).

It belongs to the universal ribosomal protein uL24 family. As to quaternary structure, part of the 50S ribosomal subunit.

Its function is as follows. One of two assembly initiator proteins, it binds directly to the 5'-end of the 23S rRNA, where it nucleates assembly of the 50S subunit. One of the proteins that surrounds the polypeptide exit tunnel on the outside of the subunit. The protein is Large ribosomal subunit protein uL24 of Bdellovibrio bacteriovorus (strain ATCC 15356 / DSM 50701 / NCIMB 9529 / HD100).